The sequence spans 425 residues: Putative dipeptidase MGYG_00085 (425 aa).

The signal sequence occupies residues 1–31 (MAPERRSRLSETAGLFVSLLALTSIVPVQAV). His56, Asp58, and Glu168 together coordinate Zn(2+). Cysteines 107 and 197 form a disulfide. His195 is a substrate binding site. Zn(2+) contacts are provided by His239 and His260. Arg271 and Asp331 together coordinate substrate. An N-linked (GlcNAc...) asparagine glycan is attached at Asn403.

Belongs to the metallo-dependent hydrolases superfamily. Peptidase M19 family. Zn(2+) serves as cofactor.

It catalyses the reaction an L-aminoacyl-L-amino acid + H2O = 2 an L-alpha-amino acid. Its function is as follows. Hydrolyzes a wide range of dipeptides. The chain is Putative dipeptidase MGYG_00085 from Arthroderma gypseum (strain ATCC MYA-4604 / CBS 118893) (Microsporum gypseum).